Here is a 534-residue protein sequence, read N- to C-terminus: Calcium-dependent protein kinase 18 (534 aa).

The segment at 1–49 (MGLCFSSPKATRRGTGSRNPNPDSPTQGKASEKVSNKNKKNTKKIQLRH) is disordered. Gly2 carries the N-myristoyl glycine lipid modification. Polar residues predominate over residues 14–29 (GTGSRNPNPDSPTQGK). Basic residues predominate over residues 36 to 47 (NKNKKNTKKIQL). Residues 71 to 331 (YTIGKLLGHG…AAQALSHSWV (261 aa)) form the Protein kinase domain. ATP-binding positions include 77 to 85 (LGHGQFGFT) and Lys100. Asp197 functions as the Proton acceptor in the catalytic mechanism. Position 237 is a phosphoserine (Ser237). An autoinhibitory domain region spans residues 337–367 (ASEVPIDISVLNNMRQFVKFSRLKQIALRAL). EF-hand domains are found at residues 374–409 (DELDDLRDQFDAIDIDKNGSISLEEMRQALAKDVPW), 411–446 (LKDARVAEILQANDSNTDGLVDFTEFVVAALHVNQL), 453–488 (KWQQRSRAAFDKFDIDGDGFITPEELRLQTGLKGSI), and 491–518 (LLEEADVDEDGRISINEFRRLLRSASLK). Ca(2+) contacts are provided by Asp387, Asp389, Asn391, Ser393, Glu398, Asp424, Asn426, Asp428, Glu435, Asp466, Asp468, Asp470, Glu477, Asp496, Asp498, Asp500, and Arg502. Phosphoserine is present on Ser504. A Ca(2+)-binding site is contributed by Glu507.

It belongs to the protein kinase superfamily. Ser/Thr protein kinase family. CDPK subfamily.

It localises to the membrane. It carries out the reaction L-seryl-[protein] + ATP = O-phospho-L-seryl-[protein] + ADP + H(+). It catalyses the reaction L-threonyl-[protein] + ATP = O-phospho-L-threonyl-[protein] + ADP + H(+). Activated by calcium. Autophosphorylation may play an important role in the regulation of the kinase activity. May play a role in signal transduction pathways that involve calcium as a second messenger. This is Calcium-dependent protein kinase 18 (CPK18) from Arabidopsis thaliana (Mouse-ear cress).